The primary structure comprises 458 residues: 5'-adenylylsulfate reductase 3, chloroplastic (458 aa).

Residues 1–24 (MALAINVSSSSSSAISSSSFPSSD) form a disordered region. Residues 1 to 69 (MALAINVSSS…VQSITKESIV (69 aa)) constitute a chloroplast transit peptide. The span at 8-23 (SSSSSSAISSSSFPSS) shows a compositional bias: low complexity. The segment at 70 to 319 (ASEVTEKLDV…KAKECGLHKG (250 aa)) is reductase domain. The Thioredoxin domain maps to 337–458 (ASVADIFNSE…SLTSFLNLVR (122 aa)). Active-site nucleophile residues include Cys-378 and Cys-381. A disulfide bridge links Cys-378 with Cys-381.

Belongs to the APS reductase family. It depends on [4Fe-4S] cluster as a cofactor. Leaves, roots and stem.

It is found in the plastid. It localises to the chloroplast. It catalyses the reaction glutathione disulfide + sulfite + AMP + 2 H(+) = adenosine 5'-phosphosulfate + 2 glutathione. Its activity is regulated as follows. Stimulated by sodium sulfate &gt; ammonium sulfate. Its function is as follows. Reduces sulfate for Cys biosynthesis. Substrate preference is adenosine-5'-phosphosulfate (APS) &gt;&gt; 3'-phosphoadenosine-5'-phosphosulfate (PAPS). Uses glutathione or DTT as source of protons. In Arabidopsis thaliana (Mouse-ear cress), this protein is 5'-adenylylsulfate reductase 3, chloroplastic (APR3).